We begin with the raw amino-acid sequence, 519 residues long: GTPase Der (519 aa).

Composition is skewed to acidic residues over residues 1–12 (MDVEGAFADEEE) and 30–54 (GYEDSDDDFDAEDFDETEFSNPDFG). The interval 1 to 54 (MDVEGAFADEEELAPHGGWASADFDPAEFGYEDSDDDFDAEDFDETEFSNPDFG) is disordered. EngA-type G domains lie at 81–244 (CTVA…PEEP) and 254–427 (RRVA…DNWD). GTP contacts are provided by residues 87–94 (GRPNVGKS), 134–138 (DTGGW), 196–199 (NKFD), 260–267 (GKPNVGKS), 307–311 (DTAGL), and 372–375 (NKWD). Residues 428–510 (RRISTGQLNT…PVRIAVRVRE (83 aa)) enclose the KH-like domain.

This sequence belongs to the TRAFAC class TrmE-Era-EngA-EngB-Septin-like GTPase superfamily. EngA (Der) GTPase family. In terms of assembly, associates with the 50S ribosomal subunit.

Functionally, GTPase that plays an essential role in the late steps of ribosome biogenesis. This Corynebacterium glutamicum (strain ATCC 13032 / DSM 20300 / JCM 1318 / BCRC 11384 / CCUG 27702 / LMG 3730 / NBRC 12168 / NCIMB 10025 / NRRL B-2784 / 534) protein is GTPase Der.